The following is a 148-amino-acid chain: Putative fusion protein (148 aa).

Residues 1 to 34 (MDRALSTFPGDDDETNERNINHREKTSGEHGHYE) form a disordered region. A compositionally biased stretch (basic and acidic residues) spans 16 to 34 (NERNINHREKTSGEHGHYE).

The protein belongs to the poxviruses fusion protein family. In terms of assembly, homotrimer, covalently linked.

Its subcellular location is the virion membrane. This is Putative fusion protein from Sheeppox virus (strain KS-1) (SPPV).